We begin with the raw amino-acid sequence, 368 residues long: MSILEKVQPIETMLPERYHKMSKEDMEKRVHEIKEKMGKMLFIPGHHYQKDEVVQFSDAAGDSLQLAQVAASNKDAKYIVFCGVHFMAETADMLTTDDQIVILPDMRAGCSMADMADIEQTERAWKELTKLFGDTMIPLTYVNSTAAIKAFCGRNGGATVTSSNAKQMVSWAFTQKERLVFLPDQHLGRNTAYDLGIPLDKMAVWDPHTDSLEYDGDIEEIQVILWKGHCSVHQNFTVKNIENVRKNHPDMNIIVHPECCYEVVAASDYAGSTKYIIDMIESAPSGSKWAIGTEMNLVNRIIQQHPDKEIVSLNPFMCPCLTMNRIDLPHLLWALETIERGEEINVISVDKQVTAEAVLALNRMLERV.

2 residues coordinate iminosuccinate: histidine 46 and serine 63. Residue cysteine 110 coordinates [4Fe-4S] cluster. Iminosuccinate is bound by residues 141-143 and serine 162; that span reads YVN. Cysteine 230 contacts [4Fe-4S] cluster. Iminosuccinate-binding positions include 256–258 and threonine 273; that span reads HPE. Cysteine 320 contributes to the [4Fe-4S] cluster binding site.

The protein belongs to the quinolinate synthase family. Type 3 subfamily. Requires [4Fe-4S] cluster as cofactor.

The protein resides in the cytoplasm. It carries out the reaction iminosuccinate + dihydroxyacetone phosphate = quinolinate + phosphate + 2 H2O + H(+). It participates in cofactor biosynthesis; NAD(+) biosynthesis; quinolinate from iminoaspartate: step 1/1. Functionally, catalyzes the condensation of iminoaspartate with dihydroxyacetone phosphate to form quinolinate. The chain is Quinolinate synthase from Bacillus cereus (strain G9842).